Reading from the N-terminus, the 267-residue chain is Acetyl-coenzyme A carboxylase carboxyl transferase subunit beta, chloroplastic (267 aa).

Residues 12–267 (LWKKCDSCNI…TIHMILDLHN (256 aa)) form the CoA carboxyltransferase N-terminal domain. Positions 16, 19, 35, and 38 each coordinate Zn(2+). Residues 16–38 (CDSCNILISKFDFYKHDKVCPEC) form a C4-type zinc finger.

It belongs to the AccD/PCCB family. Acetyl-CoA carboxylase is a heterohexamer composed of biotin carboxyl carrier protein, biotin carboxylase and 2 subunits each of ACCase subunit alpha and ACCase plastid-coded subunit beta (accD). Requires Zn(2+) as cofactor.

Its subcellular location is the plastid. The protein localises to the chloroplast stroma. It carries out the reaction N(6)-carboxybiotinyl-L-lysyl-[protein] + acetyl-CoA = N(6)-biotinyl-L-lysyl-[protein] + malonyl-CoA. Its pathway is lipid metabolism; malonyl-CoA biosynthesis; malonyl-CoA from acetyl-CoA: step 1/1. In terms of biological role, component of the acetyl coenzyme A carboxylase (ACC) complex. Biotin carboxylase (BC) catalyzes the carboxylation of biotin on its carrier protein (BCCP) and then the CO(2) group is transferred by the transcarboxylase to acetyl-CoA to form malonyl-CoA. In Cyanidium caldarium (Red alga), this protein is Acetyl-coenzyme A carboxylase carboxyl transferase subunit beta, chloroplastic.